A 220-amino-acid chain; its full sequence is V-set and transmembrane domain-containing protein 2-like protein (220 aa).

An N-terminal signal peptide occupies residues 1-24; the sequence is MGAPLAAALGALHYLALFLQLGGA. The Ig-like domain maps to 41–158; it reads ALFTETPHDM…DGGRGVPRVL (118 aa). Cys-62 and Cys-142 are disulfide-bonded. The segment covering 165-180 has biased composition (pro residues); that stretch reads PAPPRAPRPRGQPPGE. The disordered stretch occupies residues 165 to 220; that stretch reads PAPPRAPRPRGQPPGEEPGRGPTLLFLIILPGTGSGTPREAEPHQPHAGGCPARQS.

The sequence is that of V-set and transmembrane domain-containing protein 2-like protein (Vstm2l) from Mus musculus (Mouse).